The primary structure comprises 168 residues: uncharacterized protein (168 aa).

A run of 2 helical transmembrane segments spans residues 27 to 47 (NWLV…RISG) and 147 to 167 (IENG…QVMF).

It localises to the membrane. This is an uncharacterized protein from Saccharomyces cerevisiae (strain ATCC 204508 / S288c) (Baker's yeast).